A 473-amino-acid chain; its full sequence is Pre-mRNA-splicing factor prp5 (473 aa).

WD repeat units follow at residues 161–191 (GHLGWVRCVDVEPGNQWFCTGAGDRTIKIWD), 203–233 (GHIATVRGLAVSPRHPYLFSCGEDKMVKCWD), 245–275 (GHLSGVYALKLHPTLDVLVTAGRDAVARVWD), 287–317 (GHKSTVASLAVQEFDPQVVTGSMDSTIRLWD), 329–358 (HHKKTVRALSLHPDEFTFASGSSDNIKHWK), 370–399 (GHNAIVNTLSINSDNVMFSGADNGSMCFWD), and 419–449 (DSEAGIFASSFDKTGLRLITCEADKSVKIYK).

This sequence belongs to the WD repeat PRL1/PRL2 family. Belongs to the 40S cdc5-associated complex (or cwf complex), a spliceosome sub-complex reminiscent of a late-stage spliceosome composed of the U2, U5 and U6 snRNAs and at least brr2, cdc5, cwf2/prp3, cwf3/syf1, cwf4/syf3, cwf5/ecm2, spp42/cwf6, cwf7/spf27, cwf8, cwf9, cwf10, cwf11, cwf12, prp45/cwf13, cwf14, cwf15, cwf16, cwf17, cwf18, cwf19, cwf20, cwf21, cwf22, cwf23, cwf24, cwf25, cwf26, cyp7/cwf27, cwf28, cwf29/ist3, lea1, msl1, prp5/cwf1, prp10, prp12/sap130, prp17, prp22, sap61, sap62, sap114, sap145, slu7, smb1, smd1, smd3, smf1, smg1 and syf2.

It localises to the nucleus. Its function is as follows. Required for both cell cycle progression at G2/M and pre-mRNA splicing. Interacts genetically with the PRP4 kinase. This chain is Pre-mRNA-splicing factor prp5 (prp5), found in Schizosaccharomyces pombe (strain 972 / ATCC 24843) (Fission yeast).